A 333-amino-acid chain; its full sequence is Ornithine carbamoyltransferase (333 aa).

Residues 56 to 59, R107, and 134 to 137 each bind carbamoyl phosphate; these read STRT and HPTQ. L-ornithine contacts are provided by residues N167, D231, and 235–236; that span reads SM. Carbamoyl phosphate-binding positions include 273 to 274 and R318; that span reads CL.

The protein belongs to the aspartate/ornithine carbamoyltransferase superfamily. OTCase family.

It is found in the cytoplasm. It catalyses the reaction carbamoyl phosphate + L-ornithine = L-citrulline + phosphate + H(+). The protein operates within amino-acid degradation; L-arginine degradation via ADI pathway; carbamoyl phosphate from L-arginine: step 2/2. Reversibly catalyzes the transfer of the carbamoyl group from carbamoyl phosphate (CP) to the N(epsilon) atom of ornithine (ORN) to produce L-citrulline. The sequence is that of Ornithine carbamoyltransferase from Clostridium botulinum (strain Langeland / NCTC 10281 / Type F).